A 260-amino-acid chain; its full sequence is Indole-3-glycerol phosphate synthase (260 aa).

This sequence belongs to the TrpC family.

The catalysed reaction is 1-(2-carboxyphenylamino)-1-deoxy-D-ribulose 5-phosphate + H(+) = (1S,2R)-1-C-(indol-3-yl)glycerol 3-phosphate + CO2 + H2O. Its pathway is amino-acid biosynthesis; L-tryptophan biosynthesis; L-tryptophan from chorismate: step 4/5. The sequence is that of Indole-3-glycerol phosphate synthase from Koribacter versatilis (strain Ellin345).